The following is a 573-amino-acid chain: BICD family-like cargo adapter 1 (573 aa).

The disordered stretch occupies residues 67–97 (ERPSDPGEHPQAEPGSLAEGAGPQPPPSQDP). Over residues 68-77 (RPSDPGEHPQ) the composition is skewed to basic and acidic residues. A CC1 box motif is present at residues 113 to 117 (AARLG). The stretch at 118–376 (KALLERNQDM…QLWEAYCQVR (259 aa)) forms a coiled coil. The tract at residues 386 to 412 (DSADSAVSTDSSMDESSETSSAKDVPA) is disordered. Low complexity predominate over residues 387–396 (SADSAVSTDS). Residues 440–525 (LSVEMTALKE…LEAWQDDMHR (86 aa)) are a coiled coil.

It belongs to the BICDR family. As to quaternary structure, part of a tripartite complex with dynein and dynactin, acts an adapter linking the dynein motor complex and dynactin. Interacts with KIF1C. Interacts with RAB6A and RAB6B; interaction is specific to Rab6.

The protein localises to the cytoplasm. It localises to the cytoskeleton. It is found in the microtubule organizing center. The protein resides in the centrosome. Its function is as follows. Acts as an adapter protein linking the dynein motor complex to various cargos and converts dynein from a non-processive to a highly processive motor in the presence of dynactin. Facilitates the interaction between dynein and dynactin and activates dynein processivity (the ability to move along a microtubule for a long distance without falling off the track). Predominantly recruits 2 dyneins, which increases both the force and speed of the microtubule motor. Component of secretory vesicle machinery in developing neurons that acts as a regulator of neurite outgrowth. Regulates the secretory vesicle transport by controlling the accumulation of Rab6-containing secretory vesicles in the pericentrosomal region restricting anterograde secretory transport during the early phase of neuronal differentiation, thereby inhibiting neuritogenesis. In Homo sapiens (Human), this protein is BICD family-like cargo adapter 1 (BICDL1).